Consider the following 359-residue polypeptide: Molybdenum import ATP-binding protein ModC (359 aa).

One can recognise an ABC transporter domain in the interval 1-233 (MSGLTVSIRG…IDAESEGGGV (233 aa)). 32–39 (GHSGAGKT) provides a ligand contact to ATP. Residues 289 to 355 (AISIRNLLPV…VKAVSVDRAA (67 aa)) form the Mop domain.

It belongs to the ABC transporter superfamily. Molybdate importer (TC 3.A.1.8) family. In terms of assembly, the complex is composed of two ATP-binding proteins (ModC), two transmembrane proteins (ModB) and a solute-binding protein (ModA).

The protein localises to the cell inner membrane. It carries out the reaction molybdate(out) + ATP + H2O = molybdate(in) + ADP + phosphate + H(+). In terms of biological role, part of the ABC transporter complex ModABC involved in molybdenum import. Responsible for energy coupling to the transport system. The chain is Molybdenum import ATP-binding protein ModC from Brucella melitensis biotype 1 (strain ATCC 23456 / CCUG 17765 / NCTC 10094 / 16M).